We begin with the raw amino-acid sequence, 273 residues long: AECCGQKRSLSREALQKDLDDKLFGQHLAKKVILNAVSGFLSNPKPKKPLTLSLHGWTGTGKNFASKIIAENIYEGGLNSDYVHLFVATLHFPHASNVTLYKDQLQMWIRGNVSACARSIFIFDEMDKMHAGLIDAIKPFLDYYDVVDEVSYQKAIFIFLSNAGAERITDVALDFWKSGKQREEIKLRDMEHALAVSVFNNKNSGFWHSSLIDRNLIDYFVPFLPLEYKHLKMCIRVEMQSRGYEVDEDIISKVAEEMTFFPKEERVFSDKGC.

The tract at residues lysine 45 to glycine 205 is interaction with SNAPIN. Glycine 56–asparagine 63 lines the ATP pocket. Asparagine 97 and asparagine 112 each carry an N-linked (GlcNAc...) asparagine glycan.

The protein belongs to the ClpA/ClpB family. Torsin subfamily. Homohexamer. Interacts with TOR1B; the interaction may be specific of neural tissues. Interacts (ATP-bound) with TOR1AIP1 and TOR1AIP2; the interactions induce ATPase activity. Interacts with KLHL14; preferentially when ATP-free. Interacts with KLC1 (via TPR repeats); the interaction associates TOR1A with the kinesin oligomeric complex. Interacts with COPS4; the interaction associates TOR1A with the CSN complex. Interacts with SNAPIN; the interaction is direct and associates SNAPIN with the CSN complex. Interacts with STON2. Interacts (ATP-bound) with SYNE3 (via KASH domain); the interaction is required for SYNE3 nuclear envelope localization. Interacts with VIM; the interaction associates TOR1A with the cytoskeleton. Interacts with PLEC. Interacts (ATP-bound) with SLC6A3; regulates SLC6A3 transport to the plasma membrane. Post-translationally, N-glycosylated.

The protein localises to the endoplasmic reticulum lumen. It is found in the nucleus membrane. Its subcellular location is the cell projection. The protein resides in the growth cone. It localises to the cytoplasmic vesicle membrane. The protein localises to the synapse. It is found in the synaptosome. Its subcellular location is the cytoplasm. The protein resides in the cytoskeleton. It catalyses the reaction ATP + H2O = ADP + phosphate + H(+). Functionally, protein with chaperone functions important for the control of protein folding, processing, stability and localization as well as for the reduction of misfolded protein aggregates. Involved in the regulation of synaptic vesicle recycling, controls STON2 protein stability in collaboration with the COP9 signalosome complex (CSN). In the nucleus, may link the cytoskeleton with the nuclear envelope, this mechanism seems to be crucial for the control of nuclear polarity, cell movement and, specifically in neurons, nuclear envelope integrity. Participates in the cellular trafficking and may regulate the subcellular location of multipass membrane proteins such as the dopamine transporter SLC6A3, leading to the modulation of dopamine neurotransmission. In the endoplasmic reticulum, plays a role in the quality control of protein folding by increasing clearance of misfolded proteins such as SGCE variants or holding them in an intermediate state for proper refolding. May have a redundant function with TOR1B in non-neural tissues. The chain is Torsin-1A (TOR1A) from Cricetus cricetus (Black-bellied hamster).